The following is a 431-amino-acid chain: Enolase (431 aa).

Gln163 is a (2R)-2-phosphoglycerate binding site. The active-site Proton donor is Glu205. 3 residues coordinate Mg(2+): Asp242, Glu288, and Asp315. (2R)-2-phosphoglycerate is bound by residues Lys340, Arg369, Ser370, and Lys391. Residue Lys340 is the Proton acceptor of the active site.

The protein belongs to the enolase family. The cofactor is Mg(2+).

The protein resides in the cytoplasm. Its subcellular location is the secreted. It localises to the cell surface. The enzyme catalyses (2R)-2-phosphoglycerate = phosphoenolpyruvate + H2O. Its pathway is carbohydrate degradation; glycolysis; pyruvate from D-glyceraldehyde 3-phosphate: step 4/5. Catalyzes the reversible conversion of 2-phosphoglycerate (2-PG) into phosphoenolpyruvate (PEP). It is essential for the degradation of carbohydrates via glycolysis. The polypeptide is Enolase (Trichlorobacter lovleyi (strain ATCC BAA-1151 / DSM 17278 / SZ) (Geobacter lovleyi)).